Here is a 368-residue protein sequence, read N- to C-terminus: MSDLEQLQSQILADIASASDEAALEAVRVATLGKKGSISALLSTLGKMSPDERKSEGAKINLAKDTVTQALAARREVLKALALDARLASETIDVTLPLRESPAEAGRIHPLSQVWDEVTTIFADMGFAVAEGPDIETDDYNFTRLNFPEGHPAREMHDTFYFNPKEAAGSEAGEKPSRLLLRTHTSPVQVRTMLSQKPPIRVICPGRTYRSDSDQTHTPMFHQVEGLVIDKSSHLGHLKWILHEFCKAFFEVDNVNMRFRPSFFPFTEPSLEVDIQCRRDKNEIRFGEGEDWLEILGCGMVHPNVLKLCGLDPEVYQGFAWGMGIDRIAMLKYGIADLRQLFEGDVRWLNHYGFRPLEVPTLAGGLSS.

A Mg(2+)-binding site is contributed by Glu-268.

It belongs to the class-II aminoacyl-tRNA synthetase family. Phe-tRNA synthetase alpha subunit type 1 subfamily. In terms of assembly, tetramer of two alpha and two beta subunits. Mg(2+) is required as a cofactor.

It localises to the cytoplasm. The catalysed reaction is tRNA(Phe) + L-phenylalanine + ATP = L-phenylalanyl-tRNA(Phe) + AMP + diphosphate + H(+). In Nitrobacter hamburgensis (strain DSM 10229 / NCIMB 13809 / X14), this protein is Phenylalanine--tRNA ligase alpha subunit.